Consider the following 179-residue polypeptide: ATP synthase subunit b (179 aa).

A helical membrane pass occupies residues 23–43; the sequence is IVVGLVAFGLLAFVLMKFVFP.

It belongs to the ATPase B chain family. In terms of assembly, F-type ATPases have 2 components, F(1) - the catalytic core - and F(0) - the membrane proton channel. F(1) has five subunits: alpha(3), beta(3), gamma(1), delta(1), epsilon(1). F(0) has three main subunits: a(1), b(2) and c(10-14). The alpha and beta chains form an alternating ring which encloses part of the gamma chain. F(1) is attached to F(0) by a central stalk formed by the gamma and epsilon chains, while a peripheral stalk is formed by the delta and b chains.

The protein resides in the cell membrane. Its function is as follows. F(1)F(0) ATP synthase produces ATP from ADP in the presence of a proton or sodium gradient. F-type ATPases consist of two structural domains, F(1) containing the extramembraneous catalytic core and F(0) containing the membrane proton channel, linked together by a central stalk and a peripheral stalk. During catalysis, ATP synthesis in the catalytic domain of F(1) is coupled via a rotary mechanism of the central stalk subunits to proton translocation. In terms of biological role, component of the F(0) channel, it forms part of the peripheral stalk, linking F(1) to F(0). The polypeptide is ATP synthase subunit b (Salinispora arenicola (strain CNS-205)).